Here is a 687-residue protein sequence, read N- to C-terminus: MSYIQFESGREKDKARQELREAREAMLQQAKERAELRGQRERQKELRGEADWMLPALAKKLEKPAKKSKKNVSKHKSRSKSKSSKKSRKHRNSSSSSESSTSSSSSFSEDEKERKRRKKKSKRSRKESASEDEWVEAPPPLAADNVTKKEPPQRDDWMTSESLLLKTFSRERKEPAKPNEKAQQIDAYDPAKSGRELNPYWKSNGTGLPGFQKPQDDDERQAKPHSSSSAQGSSRGWRKPGAKAPSPPRRSRSRSKSATSSDEEEEEAVQQPKSRPSCLTDEQINELAGKAIKAELKGKKELAAELNQQLEAARKERAEFIASGESVRNANTRPAKSKASAEHVLLTKVDQSGNVRPLVQSGDPNESYGGRMGPKRGSKKVDTHVDGQRVRYFADDDRYDIKQMFEREKHATAAEVNLQYADIVSKHKNPNDDLDDIFADKVRKQISASDAEKREMQSAIREHEKLVATLDNCERCFDSAKLDKQLLVSLGDKIYLSLPWYMGLQSGHCILTTLQHVPCCTQLDEDAWEEISNFRKALTRMFAARRQDVVFYEIANKLHRRPHLSVHCIPIPASQGEMAPFYFKKAIEESEQEWCINKQLVSLRQKSLRAAIPKGLPYVWVHFGMDSGFAHVIEDEDRFPANFAQEILGGMLELNPNAWRKPRKEANPIGKVKSFAENWKKFDCTQN.

The stretch at 6 to 51 (FESGREKDKARQELREAREAMLQQAKERAELRGQRERQKELRGEAD) forms a coiled coil. Residues 24 to 50 (EAMLQQAKERAELRGQRERQKELRGEA) are compositionally biased toward basic and acidic residues. A disordered region spans residues 24–281 (EAMLQQAKER…PKSRPSCLTD (258 aa)). Basic residues predominate over residues 66–92 (KKSKKNVSKHKSRSKSKSSKKSRKHRN). Positions 93 to 107 (SSSSSESSTSSSSSF) are enriched in low complexity. Positions 108 to 131 (SEDEKERKRRKKKSKRSRKESASE) form a coiled coil. Basic residues predominate over residues 114–125 (RKRRKKKSKRSR). Phosphoserine is present on residues Ser-128 and Ser-130. Basic and acidic residues-rich tracts occupy residues 146 to 157 (VTKKEPPQRDDW) and 168 to 180 (FSRE…KPNE). Positions 290–325 (KAIKAELKGKKELAAELNQQLEAARKERAEFIASGE) form a coiled coil. Positions 355–383 (VRPLVQSGDPNESYGGRMGPKRGSKKVDT) are disordered. Residues 444–475 (KQISASDAEKREMQSAIREHEKLVATLDNCER) adopt a coiled-coil conformation.

This sequence belongs to the CWF19 family.

The sequence is that of CWF19-like protein 2 homolog from Drosophila melanogaster (Fruit fly).